Consider the following 175-residue polypeptide: NADH-ubiquinone oxidoreductase chain 6 (175 aa).

A run of 5 helical transmembrane segments spans residues 1-21 (MMTY…VSFS), 25-45 (SPIY…GIVL), 47-67 (FGGS…MLVV), 88-108 (AVLA…CYIL), and 149-169 (YGTW…LVIM).

Belongs to the complex I subunit 6 family. As to quaternary structure, core subunit of respiratory chain NADH dehydrogenase (Complex I) which is composed of 45 different subunits.

Its subcellular location is the mitochondrion inner membrane. It catalyses the reaction a ubiquinone + NADH + 5 H(+)(in) = a ubiquinol + NAD(+) + 4 H(+)(out). In terms of biological role, core subunit of the mitochondrial membrane respiratory chain NADH dehydrogenase (Complex I) which catalyzes electron transfer from NADH through the respiratory chain, using ubiquinone as an electron acceptor. Essential for the catalytic activity and assembly of complex I. The polypeptide is NADH-ubiquinone oxidoreductase chain 6 (MT-ND6) (Felis catus (Cat)).